We begin with the raw amino-acid sequence, 365 residues long: GDSL lipase (365 aa).

The first 27 residues, 1-27 (MAVASRKLGALVLVAVLCLSLPTGCLS), serve as a signal peptide directing secretion. Residue Ser40 is the Nucleophile of the active site. Asn189 and Asn310 each carry an N-linked (GlcNAc...) asparagine glycan. Active-site charge relay system residues include Asp318 and His321.

It belongs to the 'GDSL' lipolytic enzyme family. As to expression, restricted to the pericarp during achene maturation. Expressed in the leaves of mature plants and seedlings, as well as in buds and flowers. Present in disk florets.

It localises to the secreted. The protein localises to the extracellular space. The enzyme catalyses (Z,S)-pyrethrolone + (1R,3R)-chrysanthemoyl-CoA = pyrethrin I + CoA. It catalyses the reaction (Z,S)-pyrethrolone + (1R,3R)-pyrethroyl-CoA = pyrethrin II + CoA. It carries out the reaction (Z,S)-jasmololone + (1R,3R)-chrysanthemoyl-CoA = jasmolin I + CoA. The catalysed reaction is (Z,S)-cinerolone + (1R,3R)-chrysanthemoyl-CoA = cinerin I + CoA. The enzyme catalyses (Z,S)-jasmololone + (1R,3R)-pyrethroyl-CoA = jasmolin II + CoA. It catalyses the reaction (Z,S)-cinerolone + (1R,3R)-pyrethroyl-CoA = cinerin II + CoA. It functions in the pathway isoprenoid biosynthesis. Component of the monoterpenoid pyrethrins biosynthesis; pyrethrins are widely used plant-derived pesticide. Acyltransferase that catalyzes the esterification of terpene acids and lipid alcohol substrates into pyrethrins; mediates the transfer of a chrysanthemoyl moiety from the coenzyme A (CoA) thio-ester chrysanthemoyl CoA to pyrethrolone, and, to a lower extent, to jasmololone and cinerolone thus producing pyrethrins (e.g. pyrethrin type I). Can also use pyrethroyl CoA as substrate. Also has esterase activity, being able to cleave the ester bond of pyrethrin I, p-nitrophenyl butanoate and p-nitrophenyl octanoate to produce pyrethrolone and p-nitrophenol, respectively. In Tanacetum cinerariifolium (Dalmatian daisy), this protein is GDSL lipase.